A 210-amino-acid chain; its full sequence is Vacuolar protein sorting-associated protein 2 homolog 3 (210 aa).

Residues 1–23 (MNIFTKKPNPREVLRESKREMTQ) are disordered. Basic and acidic residues predominate over residues 9 to 23 (NPREVLRESKREMTQ). Positions 28-84 (IEKEIGSLQSEEKKLVLEIKRTAKSGNEGATKILARQLIRLRQQIANLQGSRAQMRG) form a coiled coil. Positions 178–200 (LSSAPKGKIGGKKAEDVGSSGID) are disordered.

The protein belongs to the SNF7 family. Component of the endosomal sorting required for transport complex III (ESCRT-III), composed at least of VPS2, VPS20, VPS24 and VPS32.

The protein resides in the endosome. In terms of biological role, component of the ESCRT-III complex, which is required for multivesicular bodies (MVBs) formation and sorting of endosomal cargo proteins into MVBs. The ESCRT-III complex is probably involved in the concentration of MVB cargo. In Arabidopsis thaliana (Mouse-ear cress), this protein is Vacuolar protein sorting-associated protein 2 homolog 3 (VPS2.3).